A 535-amino-acid polypeptide reads, in one-letter code: Zinc transporter ZIP5 (535 aa).

The signal sequence occupies residues 1-19 (MGPPVHHLLTGLCVGVALG). Residues 20–210 (WVGGSVPNLG…PAPPGDVLSA (191 aa)) lie on the Extracellular side of the membrane. N-linked (GlcNAc...) asparagine glycosylation is found at Asn49 and Asn158. Residues 211-231 (LLHSGLAVLFLSLPAPLSLLL) form a helical membrane-spanning segment. Residues 232–242 (LRLLGPRLLRP) are Cytoplasmic-facing. Residues 243–263 (VLGFLGALAVGTLCGDALLHL) form a helical membrane-spanning segment. Topologically, residues 264–285 (LPHAQGGRHTGPSEQSEEDLGP) are extracellular. The chain crosses the membrane as a helical span at residues 286–306 (GLSVLGGLFLLFMLENTLGLV). Residues 307-439 (RHRGLRPRCC…LLQEGLSFRK (133 aa)) are Cytoplasmic-facing. A disordered region spans residues 316 to 373 (CRNKRDLGEPNPDPEDGSGMVLRPLQAASEPEVQGQRENRQSSPSLAPPGHQGHSHEH). A Phosphoserine modification is found at Ser333. The residue at position 371 (His371) is a Pros-methylhistidine. A helical membrane pass occupies residues 440-460 (LLLLSLVSGALGLGGAALGVG). The Extracellular portion of the chain corresponds to 461-465 (LSLGP). The chain crosses the membrane as a helical span at residues 466–486 (VPLTPWVFGTTAGVFLYVALV). Residues 487–503 (DMLPTLLRPPEPLPVFH) lie on the Cytoplasmic side of the membrane. Residues 504-524 (VLLQGLGLLLGGSLMFTIALL) traverse the membrane as a helical segment. The Extracellular portion of the chain corresponds to 525–535 (EEQLVPTVPDG).

Belongs to the ZIP transporter (TC 2.A.5) family. Homodimer. Post-translationally, N-Glycosylated. Methylated at His-371 by METTL9. In terms of tissue distribution, expressed in all stages of eye development and primarily in the sclera and several layers of the retina, including the inner segment, outer plexiform layer and ganglion cell layer. Expressed in pancreas, kidney and the proximal and distal small intestine as well as in the embryonic visceral yolk sac. In the proximal intestine, expression is predominant in the crypts but diminishes toward the apical regions of the villi.

The protein resides in the basolateral cell membrane. The catalysed reaction is Zn(2+)(in) = Zn(2+)(out). Its function is as follows. Uniporter that transports zinc(2+) into polarized cells of enterocytes, pancreatic acinar and endoderm cells across the basolateral membrane and participates, notably, in zinc excretion from the intestine by the uptake of zinc from the blood into the intestine. The transport mechanism is temperature- and concentration-dependent and saturable. In addition, is also a high affinity copper transporter in vitro. Also may regulate glucose-stimulated insulin secretion (GSIS) in islets primarily through the zinc-activated SIRT1-PPARGC1A axis. Could regulate the BMP/TGF-beta (bone morphogenetic protein/transforming growth factor-beta) signaling pathway and modulates extracellular matrix (ECM) proteins of the sclera. Plays a role in eye development. The chain is Zinc transporter ZIP5 from Mus musculus (Mouse).